The primary structure comprises 530 residues: Phosphoenolpyruvate carboxykinase (ATP) (530 aa).

Substrate-binding residues include R58, Y195, and K201. Residues K201, H220, and 236 to 244 (GLSGTGKTT) each bind ATP. Mn(2+)-binding residues include K201 and H220. D257 serves as a coordination point for Mn(2+). Residues E285, R321, 440–441 (RI), and T446 each bind ATP. R321 contributes to the substrate binding site.

Belongs to the phosphoenolpyruvate carboxykinase (ATP) family. It depends on Mn(2+) as a cofactor.

Its subcellular location is the cytoplasm. It catalyses the reaction oxaloacetate + ATP = phosphoenolpyruvate + ADP + CO2. The protein operates within carbohydrate biosynthesis; gluconeogenesis. In terms of biological role, involved in the gluconeogenesis. Catalyzes the conversion of oxaloacetate (OAA) to phosphoenolpyruvate (PEP) through direct phosphoryl transfer between the nucleoside triphosphate and OAA. This chain is Phosphoenolpyruvate carboxykinase (ATP), found in Staphylococcus haemolyticus (strain JCSC1435).